The following is a 309-amino-acid chain: Cilia-and flagella-associated protein 96 (309 aa).

Positions 220–249 (EEKKKTISNTFKPSSPGKKPGGMKAGTFDP) are disordered.

The protein belongs to the CFAP96 family. Detected in testis and fetal liver.

The protein resides in the cytoplasm. It localises to the cytoskeleton. The protein localises to the microtubule organizing center. It is found in the centrosome. The sequence is that of Cilia-and flagella-associated protein 96 from Homo sapiens (Human).